The sequence spans 265 residues: Tryptophan synthase alpha chain (265 aa).

Residues E49 and E60 each act as proton acceptor in the active site.

Belongs to the TrpA family. In terms of assembly, tetramer of two alpha and two beta chains.

It carries out the reaction (1S,2R)-1-C-(indol-3-yl)glycerol 3-phosphate + L-serine = D-glyceraldehyde 3-phosphate + L-tryptophan + H2O. The protein operates within amino-acid biosynthesis; L-tryptophan biosynthesis; L-tryptophan from chorismate: step 5/5. In terms of biological role, the alpha subunit is responsible for the aldol cleavage of indoleglycerol phosphate to indole and glyceraldehyde 3-phosphate. The protein is Tryptophan synthase alpha chain of Janthinobacterium sp. (strain Marseille) (Minibacterium massiliensis).